We begin with the raw amino-acid sequence, 94 residues long: Integration host factor subunit beta (94 aa).

It belongs to the bacterial histone-like protein family. As to quaternary structure, heterodimer of an alpha and a beta chain.

This protein is one of the two subunits of integration host factor, a specific DNA-binding protein that functions in genetic recombination as well as in transcriptional and translational control. The chain is Integration host factor subunit beta from Yersinia pseudotuberculosis serotype O:1b (strain IP 31758).